The primary structure comprises 615 residues: Chaperone protein HscA homolog (615 aa).

This sequence belongs to the heat shock protein 70 family.

Functionally, chaperone involved in the maturation of iron-sulfur cluster-containing proteins. Has a low intrinsic ATPase activity which is markedly stimulated by HscB. The polypeptide is Chaperone protein HscA homolog (Aeromonas hydrophila subsp. hydrophila (strain ATCC 7966 / DSM 30187 / BCRC 13018 / CCUG 14551 / JCM 1027 / KCTC 2358 / NCIMB 9240 / NCTC 8049)).